Consider the following 514-residue polypeptide: Protein translocase subunit SecD (514 aa).

5 helical membrane-spanning segments follow: residues 7–27 (WKIF…LPNF), 357–377 (IIGF…LGLF), 389–409 (VLAL…AGII), 448–470 (FATI…IFGV), and 482–502 (IGII…IDIW).

The protein belongs to the SecD/SecF family. SecD subfamily. Forms a complex with SecF. Part of the essential Sec protein translocation apparatus which comprises SecA, SecYEG and auxiliary proteins SecDF-YajC and YidC.

Its subcellular location is the cell inner membrane. Its function is as follows. Part of the Sec protein translocase complex. Interacts with the SecYEG preprotein conducting channel. SecDF uses the proton motive force (PMF) to complete protein translocation after the ATP-dependent function of SecA. The polypeptide is Protein translocase subunit SecD (Rickettsia bellii (strain RML369-C)).